A 1705-amino-acid polypeptide reads, in one-letter code: Intersectin-1 (1705 aa).

2 EH domains span residues 21-109 (ERAK…PVAM) and 220-309 (SRLK…SFRR). 2 consecutive EF-hand domains span residues 53–88 (LPQP…IKLK) and 253–288 (LPQS…IDVA). Ca(2+) is bound by residues Asp66, Asn68, Asp70, Arg72, Glu77, Asp266, Asp268, Asp270, Lys272, and Glu277. Disordered regions lie at residues 322-355 (VSVD…KREN), 386-433 (RAEQ…ERRE), and 668-708 (RYKF…PPEP). Positions 325-697 (DQRLPEEPEE…VEKKPEIQEK (373 aa)) are KLERQ. Residues 339 to 355 (NADKKLPVTFEDKKREN) are compositionally biased toward basic and acidic residues. Residues 350–687 (DKKRENFERG…KREESIQKCE (338 aa)) are a coiled coil. Over residues 668-699 (RYKFQDEEKEKREESIQKCEVEKKPEIQEKPN) the composition is skewed to basic and acidic residues. The 62-residue stretch at 732–793 (VKVVYYRALY…PANYAERMPE (62 aa)) folds into the SH3 1 domain. The span at 823–833 (AFTNTSTNSNN) shows a compositional bias: low complexity. Residues 823-851 (AFTNTSTNSNNWADFSSTWPTNNTDKVES) form a disordered region. Residues 834-846 (WADFSSTWPTNNT) show a composition bias toward polar residues. The region spanning 897 to 955 (VEGLQAQALYPWRAKKDNHLNFNKNDVITVLEQQDMWWFGEVQGQKGWFPKSYVKLISG) is the SH3 2 domain. Residues 959 to 978 (KSTSIDSTSSESPASLKRVS) form a disordered region. Residues 960–973 (STSIDSTSSESPAS) are compositionally biased toward low complexity. SH3 domains follow at residues 986 to 1044 (IQGE…PKDS), 1058 to 1122 (KKPE…LLSP), and 1139 to 1198 (PPTC…LTTD). The short motif at 1088-1111 (RKKNPGGWWEGELQARGKKRQIGW) is the Bipartite nuclear localization signal; in isoform 2 element. A DH domain is found at 1221–1407 (KRQGYIHELI…EELCSQVNEG (187 aa)). In terms of domain architecture, PH spans 1446 to 1555 (KFLHSGKLYK…WVQKIKAASE (110 aa)). Positions 1563 to 1679 (KKREKAYLVR…KKDQGSKGPV (117 aa)) constitute a C2 domain. 3 residues coordinate Ca(2+): Asp1651, Ser1654, and Asp1657.

In terms of assembly, binds epn1 and epn2. Requires Ca(2+) as cofactor.

It is found in the endomembrane system. The protein resides in the synapse. The protein localises to the synaptosome. It localises to the cell projection. Its subcellular location is the lamellipodium. It is found in the cell membrane. The protein resides in the membrane. The protein localises to the clathrin-coated pit. It localises to the recycling endosome. Its subcellular location is the cytoplasm. It is found in the nucleus envelope. Its function is as follows. Adapter protein that provides a link between the endocytic membrane traffic and the actin assembly machinery. Acts as a guanine nucleotide exchange factor (GEF) for cdc42, and thereby stimulates actin nucleation mediated by wasl and the arp2/3 complex. Involved in endocytosis of activated egfr, and probably also other growth factor receptors. This Xenopus laevis (African clawed frog) protein is Intersectin-1 (itsn1).